Here is a 2116-residue protein sequence, read N- to C-terminus: MEKLLDEVLAPGGPYNLTVGSWVRDHVRSIVEGAWEVRDVVTAAQKRAIVAVIPRPVFTQMQVSDHPALHAISRYTRRHWIEWGPKEALHVLIDPSPGLLREVARVERRWVALCLHRTARKLATALAETASEAWHADYVCALRGAPSGPFYVHPEDVPHGGRAVADRCLLYYTPMQMCELMRTIDATLLVAVDLWPVALAAHVGDDWDDLGIAWHLDHDGGCPADCRGAGAGPTPGYTRPCTTRIYQVLPDTAHPGRLYRCGPRLWTRDCAVAELSWEVAQHCGHQARVRAVRCTLPIRHVRSLQPSARVRLPDLVHLAEVGRWRWFSLPRPVFQRMLSYCKTLSPDAYYSERVFKFKNALSHSITLAGNVLQEGWKGTCAEEDALCAYVAFRAWQSNARLAGIMKGAKRCAADSLSVAGWLDTIWDAIKRFFGSVPLAERMEEWEQDAAVAAFDRGPLEDGGRHLDTVQPPKSPPRPEIAATWIVHAASADRHCACAPRCDVPRERPSAPAGQPDDEALIPPWLFAERRALRCREWDFEALRARADTAAAPAPLAPRPARYPTVLYRHPAHHGPWLTLDEPGEADAALVLCDPLGQPLRGPERHFAAGAHMCAQARGLQAFVRVVPPPERPWADGGARAWAKFFRGCAWAQRLLGEPAVMHLPYTDGDVPQLIALALRTLAQQGAALALSVRDLPGGAAFDANAVTAAVRAGPGQLAATSPPPGDPPPPRRARRSQRHSDARGTPPPAPVRDPPPPAPSPPAPPRAGDPVPPTPAEPADRARDAELEVAYEPSGPPTSTKADPDSDIVESYARAAGPVHLRVRDIMDPPPGCKVVVNAANEGLLAGSGVCGAIFANATAALAADCRRLAPCPTGEAVATPGHGCGYTHIIHAVAPRRPRDPAALEEGEALLERAYRSIVALAAARRWAYVACPLLGAGVYGWSAAESLRAALAATRAEPVERVSLHICHPDRATLTHASVLVGAGLAARRVSPPPTEPLASCPAGGPGRPAQRSASPPATPLGDATAPEPRGCQGCELCRHTRVTNDRAYVNLWLERDRGATSWAMRIPEVVVYGPEHLATHFPLNHYSVLKPAEVRPPRGMCGSDMWRCRGWQGMPQVRCTPSNAHAALCRTGVPPRVSTRGGELDPNTCWLRAAANVAQVARACGAYTSAGCPKCAYGRALSEARTHEDFAALSQRWSASHADASPDGTGDPLDPLMETVGCACSRVWVGSEQEAPPDHLLVSLHRAPNGPWGVVLEVRARPEGGNPTGHFVCAVGGGPRRVSDRPHLWLAVPLSRGGGTCAATDEGLAQAYYDDLEVRRLGDDAMARAALASVQRPRKGPYNIRVWNMAAGAGKTTRILAAFTREDLYVCPTNALLHEIQAKLRARDIDIKNAATYERALTKPLAAYRRIYIDEAFTLGGEYCAFVASQTTAEVICVGDRDQCGPHYANNCRTPVPDRWPTERSRHTWRFPDCWAARLRAGLDYDIEGERTGIFACNLWDGRQVDLHLAFSRETVRRLHEAGIRAYTVREAQGMSVGTACIHVGRDGTDVALALTRDLAIVSLTRASDALYLHELEDGSLRAAGLSAFLDAGALAELKEVPAGIDRVVAVEQAPPPLPPADGIPEAQDVPPFCPRTLEELVFGRAGHPHYADLNRVTEGEREVRYMRISRHLLNKNHTEMPGTERVLSAVCAVRRYRAGEDGSTLRTAVARQHPRPFRQIPPPRVTAGVAQEWRMTYLRERIDLTDVYTQMGVAARELTDRYARRYPEIFAGMCTAQSLSVPAFLKATLKCVDAALGPRDTEDCHAAQGKAGLEIRAWAKEWVQVMSPHFRAIQKIIMRALRPQFLVAAGHTEPEVDAWWQAHYTTNAIEVDFTEFDMNQTLATRDVELEISAALLGLPCAEDYRALRAGSYCTLRELGSTETGCERTSGEPATLLHNTTVAMCMAMRMVPKGVRWAGIFQGDDMVIFLPEGARSAALKWTPAEVGLFGFHIPVKHVSTPTPSFCGHVGTAAGLFHDVMHQAIKVLCRRFDPDVLEEQQVALLDRLRGVYAALPDTVAANAAYYDYSAERVLAIVRELTAYARGRGLDHPATIGALEEIQTPYARANLHDAD.

A required for efficient proteolysis and P150-P90 interaction region spans residues 36-49 (EVRDVVTAAQKRAI). The region spanning 57–247 (VFTQMQVSDH…TRPCTTRIYQ (191 aa)) is the Alphavirus-like MT domain. Residues 715-782 (GQLAATSPPP…PTPAEPADRA (68 aa)) form a disordered region. Pro residues-rich tracts occupy residues 721–730 (SPPPGDPPPP) and 745–776 (TPPP…PTPA). 3 short sequence motifs (pxxPxR; class II SH3-binding) span residues 727 to 732 (PPPPRR), 747 to 752 (PPAPVR), and 761 to 766 (PPAPPR). One can recognise a Macro domain in the interval 806–985 (SDIVESYARA…LTHASVLVGA (180 aa)). The segment at 991–1030 (RVSPPPTEPLASCPAGGPGRPAQRSASPPATPLGDATAPE) is disordered. In terms of domain architecture, Peptidase C27 spans 1000-1301 (LASCPAGGPG…WLAVPLSRGG (302 aa)). Cysteine 1152 functions as the For cysteine protease activity in the catalytic mechanism. The interval 1152–1183 (CWLRAAANVAQVARACGAYTSAGCPKCAYGRA) is interaction with host CALM1. 4 residues coordinate Zn(2+): cysteine 1175, cysteine 1178, cysteine 1227, and histidine 1273. Residues 1193–1228 (FAALSQRWSASHADASPDGTGDPLDPLMETVGCACS) form an EF-hand-like region. The active-site For cysteine protease activity is histidine 1273. In terms of domain architecture, (+)RNA virus helicase ATP-binding spans 1320 to 1468 (EVRRLGDDAM…VPDRWPTERS (149 aa)). 1352-1359 (MAAGAGKT) contributes to the a ribonucleoside 5'-triphosphate binding site. Residues 1469 to 1609 (RHTWRFPDCW…ELKEVPAGID (141 aa)) form the (+)RNA virus helicase C-terminal domain. Positions 1700-1900 (YRAGEDGSTL…VELEISAALL (201 aa)) are involved in P150-P90 interaction. One can recognise a RdRp catalytic domain in the interval 1870–1981 (TNAIEVDFTE…FLPEGARSAA (112 aa)). The Human RB1 binding signature appears at 1902-1906 (LPCAE).

In terms of assembly, interacts with RNA-directed RNA polymerase p90. Interacts with host CALM1; this interaction is necessary for the protease activity and viral infectivity. Interacts with host C1QBP. Interacts with the capsid protein. Interacts with human RB1/retinoblastoma protein. Interacts with protease/methyltransferase p150. It depends on Zn(2+) as a cofactor. Post-translationally, specific enzymatic cleavage by its own cysteine protease yield mature proteins p150 and p90.

The protein resides in the host membrane. Its subcellular location is the host cytoplasm. The protein localises to the host perinuclear region. It carries out the reaction RNA(n) + a ribonucleoside 5'-triphosphate = RNA(n+1) + diphosphate. The catalysed reaction is a ribonucleoside 5'-triphosphate + H2O = a ribonucleoside 5'-diphosphate + phosphate + H(+). It catalyses the reaction ATP + H2O = ADP + phosphate + H(+). Probable principal replicase for the negative-strand DNA, which replicates the 40S (+) genomic RNA into (-) antigenomic RNA. It cannot replicate the (-) into (+) until cleaved into p150 and p90 mature proteins. Functionally, protease that cleaves the precursor polyprotein into two mature products. Together with RNA-directed RNA polymerase p90, replicates the 40S genomic and antigenomic RNA by recognizing replications specific signals. The heterodimer P150/p90 is probably the principal replicase for positive-strand genomic RNA and the 24S subgenomic RNA, which codes for structural proteins. Responsible for the mRNA-capping of the viral mRNAs. This function is necessary since all viral RNAs are synthesized in the cytoplasm, and host capping enzymes are restricted to the nucleus. Forms fibers late in the infection that may be involved in cell-to-cell spread of the virus RNA in the absence of virus particle formation. Its function is as follows. Together with protease/methyltransferase p150, replicates the 40S genomic and antigenomic RNA by recognizing replications specific signals. The heterodimer P150/p90 is probably the principal replicase for positive-strand genomic RNA and the 24S subgenomic RNA, which codes for structural proteins. A helicase activity is probably also present. The polypeptide is Non-structural polyprotein p200 (Homo sapiens (Human)).